Consider the following 124-residue polypeptide: Small ribosomal subunit protein bS16 (124 aa).

The interval 80 to 124 (AGLAKRPARNNPTKAQPGKKAQERAAEAKQKAEEAAAAASEAAAE) is disordered. Basic and acidic residues predominate over residues 99–113 (KAQERAAEAKQKAEE). The segment covering 114–124 (AAAAASEAAAE) has biased composition (low complexity).

Belongs to the bacterial ribosomal protein bS16 family.

The chain is Small ribosomal subunit protein bS16 from Rhizobium meliloti (strain 1021) (Ensifer meliloti).